The primary structure comprises 244 residues: Putative outer membrane protein RC0105 (244 aa).

The first 23 residues, 1–23 (MLRIVKKLGIILFVSTISINSFA), serve as a signal peptide directing secretion.

Belongs to the OmpW/AlkL family.

It localises to the cell outer membrane. The sequence is that of Putative outer membrane protein RC0105 from Rickettsia conorii (strain ATCC VR-613 / Malish 7).